Reading from the N-terminus, the 509-residue chain is Fumarate hydratase, mitochondrial (509 aa).

The N-terminal 43 residues, 1–43 (MYRSARSLHRFSASLSDLRAAQRSIKARNVCPAPGLRHQTVRM), are a transit peptide targeting the mitochondrion. Substrate is bound by residues 144–146 (SGT), 175–178 (HPND), 185–187 (SSN), and Thr-233. The Proton donor/acceptor role is filled by His-234. Ser-364 is an active-site residue. Substrate contacts are provided by residues Ser-365 and 370 to 372 (KVN).

It belongs to the class-II fumarase/aspartase family. Fumarase subfamily. In terms of assembly, homotetramer.

It localises to the mitochondrion. The protein resides in the cytoplasm. Its subcellular location is the cytosol. The protein localises to the nucleus. It is found in the chromosome. It catalyses the reaction (S)-malate = fumarate + H2O. The protein operates within carbohydrate metabolism; tricarboxylic acid cycle; (S)-malate from fumarate: step 1/1. Its function is as follows. Catalyzes the reversible stereospecific interconversion of fumarate to L-malate. Experiments in other species have demonstrated that specific isoforms of this protein act in defined pathways and favor one direction over the other. Catalyzes the hydration of fumarate to L-malate in the tricarboxylic acid (TCA) cycle to facilitate a transition step in the production of energy in the form of NADH. In terms of biological role, catalyzes the dehydration of L-malate to fumarate. Fumarate metabolism in the cytosol plays a role during urea cycle and arginine metabolism; fumarate being a by-product of the urea cycle and amino-acid catabolism. Also plays a role in DNA repair by promoting non-homologous end-joining (NHEJ). In response to DNA damage translocates to the nucleus and accumulates at DNA double-strand breaks (DSBs): acts by catalyzing formation of fumarate. This Danio rerio (Zebrafish) protein is Fumarate hydratase, mitochondrial.